A 248-amino-acid polypeptide reads, in one-letter code: Aspartate/glutamate leucyltransferase (248 aa).

It belongs to the R-transferase family. Bpt subfamily.

It localises to the cytoplasm. It carries out the reaction N-terminal L-glutamyl-[protein] + L-leucyl-tRNA(Leu) = N-terminal L-leucyl-L-glutamyl-[protein] + tRNA(Leu) + H(+). It catalyses the reaction N-terminal L-aspartyl-[protein] + L-leucyl-tRNA(Leu) = N-terminal L-leucyl-L-aspartyl-[protein] + tRNA(Leu) + H(+). Its function is as follows. Functions in the N-end rule pathway of protein degradation where it conjugates Leu from its aminoacyl-tRNA to the N-termini of proteins containing an N-terminal aspartate or glutamate. The polypeptide is Aspartate/glutamate leucyltransferase (Polynucleobacter asymbioticus (strain DSM 18221 / CIP 109841 / QLW-P1DMWA-1) (Polynucleobacter necessarius subsp. asymbioticus)).